The primary structure comprises 122 residues: Large ribosomal subunit protein uL14 (122 aa).

Belongs to the universal ribosomal protein uL14 family. Part of the 50S ribosomal subunit. Forms a cluster with proteins L3 and L19. In the 70S ribosome, L14 and L19 interact and together make contacts with the 16S rRNA in bridges B5 and B8.

In terms of biological role, binds to 23S rRNA. Forms part of two intersubunit bridges in the 70S ribosome. This is Large ribosomal subunit protein uL14 from Chlamydia pneumoniae (Chlamydophila pneumoniae).